Here is a 349-residue protein sequence, read N- to C-terminus: Probable myosin light chain kinase DDB_G0275057 (349 aa).

The disordered stretch occupies residues 1 to 33 (MGCFNSKEAGAGRPKTTTQQQQQATPEPTVTTA). Residues 16 to 33 (TTTQQQQQATPEPTVTTA) are compositionally biased toward low complexity. The Protein kinase domain maps to 56-313 (YVVGKELGRG…AKQCLDDLWL (258 aa)). ATP-binding positions include 62-70 (LGRGAFSVV) and K85. Catalysis depends on D178, which acts as the Proton acceptor.

It belongs to the protein kinase superfamily. CAMK Ser/Thr protein kinase family. CaMK subfamily.

The enzyme catalyses L-seryl-[myosin light chain] + ATP = O-phospho-L-seryl-[myosin light chain] + ADP + H(+). It catalyses the reaction L-threonyl-[myosin light chain] + ATP = O-phospho-L-threonyl-[myosin light chain] + ADP + H(+). Its activity is regulated as follows. Does not have a calmodulin-binding domain. Its function is as follows. May phosphorylate a specific serine in the N-terminus of a myosin light chain. This Dictyostelium discoideum (Social amoeba) protein is Probable myosin light chain kinase DDB_G0275057.